The sequence spans 217 residues: ATP phosphoribosyltransferase (217 aa).

Belongs to the ATP phosphoribosyltransferase family. Short subfamily. Heteromultimer composed of HisG and HisZ subunits.

It is found in the cytoplasm. The enzyme catalyses 1-(5-phospho-beta-D-ribosyl)-ATP + diphosphate = 5-phospho-alpha-D-ribose 1-diphosphate + ATP. It functions in the pathway amino-acid biosynthesis; L-histidine biosynthesis; L-histidine from 5-phospho-alpha-D-ribose 1-diphosphate: step 1/9. In terms of biological role, catalyzes the condensation of ATP and 5-phosphoribose 1-diphosphate to form N'-(5'-phosphoribosyl)-ATP (PR-ATP). Has a crucial role in the pathway because the rate of histidine biosynthesis seems to be controlled primarily by regulation of HisG enzymatic activity. The protein is ATP phosphoribosyltransferase of Syntrophomonas wolfei subsp. wolfei (strain DSM 2245B / Goettingen).